The sequence spans 363 residues: Chorismate synthase (363 aa).

Positions 48 and 54 each coordinate NADP(+). Residues R125 to S127, N238 to A239, G278, K293 to S297, and R319 each bind FMN.

It belongs to the chorismate synthase family. In terms of assembly, homotetramer. FMNH2 is required as a cofactor.

It catalyses the reaction 5-O-(1-carboxyvinyl)-3-phosphoshikimate = chorismate + phosphate. It participates in metabolic intermediate biosynthesis; chorismate biosynthesis; chorismate from D-erythrose 4-phosphate and phosphoenolpyruvate: step 7/7. Functionally, catalyzes the anti-1,4-elimination of the C-3 phosphate and the C-6 proR hydrogen from 5-enolpyruvylshikimate-3-phosphate (EPSP) to yield chorismate, which is the branch point compound that serves as the starting substrate for the three terminal pathways of aromatic amino acid biosynthesis. This reaction introduces a second double bond into the aromatic ring system. This is Chorismate synthase from Alcanivorax borkumensis (strain ATCC 700651 / DSM 11573 / NCIMB 13689 / SK2).